The chain runs to 942 residues: Leucine--tRNA ligase 1 (942 aa).

The 'HIGH' region motif lies at 39–49 (PYTNSPLHIGH). Positions 624–628 (KMSKS) match the 'KMSKS' region motif. Lys-627 serves as a coordination point for ATP.

The protein belongs to the class-I aminoacyl-tRNA synthetase family.

The protein resides in the cytoplasm. It carries out the reaction tRNA(Leu) + L-leucine + ATP = L-leucyl-tRNA(Leu) + AMP + diphosphate. The sequence is that of Leucine--tRNA ligase 1 from Sulfolobus acidocaldarius (strain ATCC 33909 / DSM 639 / JCM 8929 / NBRC 15157 / NCIMB 11770).